Reading from the N-terminus, the 305-residue chain is N-acetylneuraminate lyase 2 (305 aa).

Positions 47 and 48 each coordinate aceneuramate. Catalysis depends on tyrosine 137, which acts as the Proton donor. Lysine 165 serves as the catalytic Schiff-base intermediate with substrate. The aceneuramate site is built by threonine 167, glycine 189, aspartate 191, glutamate 192, and serine 208.

It belongs to the DapA family. NanA subfamily. As to quaternary structure, homotetramer.

The protein resides in the cytoplasm. It catalyses the reaction aceneuramate = aldehydo-N-acetyl-D-mannosamine + pyruvate. The protein operates within amino-sugar metabolism; N-acetylneuraminate degradation; D-fructose 6-phosphate from N-acetylneuraminate: step 1/5. Functionally, catalyzes the reversible aldol cleavage of N-acetylneuraminic acid (sialic acid; Neu5Ac) to form pyruvate and N-acetylmannosamine (ManNAc) via a Schiff base intermediate. This Escherichia coli O6:H1 (strain CFT073 / ATCC 700928 / UPEC) protein is N-acetylneuraminate lyase 2.